The following is a 424-amino-acid chain: CinA-like protein (424 aa).

Belongs to the CinA family.

The polypeptide is CinA-like protein (Prochlorococcus marinus (strain MIT 9312)).